Here is a 794-residue protein sequence, read N- to C-terminus: Zinc finger protein 148 (794 aa).

A Glycyl lysine isopeptide (Lys-Gly) (interchain with G-Cter in SUMO2) cross-link involves residue Lys-6. Position 51 is a phosphoserine (Ser-51). Residues Lys-88, Lys-115, and Lys-132 each participate in a glycyl lysine isopeptide (Lys-Gly) (interchain with G-Cter in SUMO2) cross-link. Residues 171–193 form a C2H2-type 1 zinc finger; the sequence is HVCEHCNAAFRTNYHLQRHVFIH. Phosphothreonine is present on Thr-194. 2 C2H2-type zinc fingers span residues 199-221 and 227-249; these read FQCS…EKIH and FRCD…KRTH. Ser-250 is modified (phosphoserine). The C2H2-type 4 zinc finger occupies 255 to 278; sequence YQCEYCLQYFSRTDRVLKHKRMCH. Lys-291 participates in a covalent cross-link: Glycyl lysine isopeptide (Lys-Gly) (interchain with G-Cter in SUMO2). Residues 298–336 form a disordered region; the sequence is EEDSGFSTSPKDNSLPKKKRQKTEKKSSGMDKESALDKS. Ser-301 and Ser-306 each carry phosphoserine. A Glycyl lysine isopeptide (Lys-Gly) (interchain with G-Cter in SUMO2) cross-link involves residue Lys-308. Residues 321–336 are compositionally biased toward basic and acidic residues; the sequence is EKKSSGMDKESALDKS. Residue Lys-356 forms a Glycyl lysine isopeptide (Lys-Gly) (interchain with G-Cter in SUMO1); alternate linkage. Lys-356 participates in a covalent cross-link: Glycyl lysine isopeptide (Lys-Gly) (interchain with G-Cter in SUMO2); alternate. A Glycyl lysine isopeptide (Lys-Gly) (interchain with G-Cter in SUMO2) cross-link involves residue Lys-402. Residue Ser-412 is modified to Phosphoserine. Glycyl lysine isopeptide (Lys-Gly) (interchain with G-Cter in SUMO2) cross-links involve residues Lys-421 and Lys-424. A compositionally biased stretch (polar residues) spans 574 to 588; the sequence is NSSEVPEVTPSENVG. Residues 574 to 599 are disordered; it reads NSSEVPEVTPSENVGSSSQASSSDKA. Lys-607 is modified (N6-acetyllysine). A phosphoserine mark is found at Ser-665 and Ser-784.

The protein belongs to the krueppel C2H2-type zinc-finger protein family. As to quaternary structure, interacts with HNRNPDL. Interacts with the 5FMC complex; the interaction requires association with CHTOP. Interacts with CAVIN1. Sumoylated with SUMO2. Desumoylated by SENP3, resulting in the stimulation of transcription of its target genes.

The protein localises to the nucleus. Functionally, involved in transcriptional regulation. Represses the transcription of a number of genes including gastrin, stromelysin and enolase. Binds to the G-rich box in the enhancer region of these genes. This chain is Zinc finger protein 148 (ZNF148), found in Pongo abelii (Sumatran orangutan).